Reading from the N-terminus, the 252-residue chain is Aquaporin TIP4-4 (252 aa).

2 consecutive transmembrane segments (helical) span residues 20 to 40 (AVLA…GSAM) and 53 to 73 (VVGL…MVSA). An NPA 1 motif is present at residues 83 to 85 (NPA). Transmembrane regions (helical) follow at residues 105–125 (VAAQ…LAVA), 143–163 (GVLM…ATVV), and 168–188 (AVGG…VLAG). The short motif at 197–199 (NPA) is the NPA 2 element. Residues 216–236 (VYWVGPLIGGPLAGLVYDGLF) traverse the membrane as a helical segment.

The protein belongs to the MIP/aquaporin (TC 1.A.8) family. TIP (TC 1.A.8.10) subfamily.

The protein resides in the vacuole membrane. Its function is as follows. Aquaporins facilitate the transport of water and small neutral solutes across cell membranes. In Zea mays (Maize), this protein is Aquaporin TIP4-4 (TIP4-4).